The chain runs to 1382 residues: Histone-lysine N-methyltransferase SUVR5 (1382 aa).

2 disordered regions span residues 43–62 and 354–373; these read TVTG…SEPK and GNTN…NTPE. 3 C2H2-type zinc fingers span residues 735-758, 769-792, and 838-861; these read FACA…EERH, LQCI…QAVH, and FVCK…QAEH. A disordered region spans residues 915–935; sequence RRMQGSKSLGTEGNTEAGVSP. Positions 919–928 are enriched in polar residues; it reads GSKSLGTEGN. Residues 1145–1221 enclose the Pre-SET domain; that stretch reads LRCSCRSSVC…TCQNRVLQNG (77 aa). Zn(2+)-binding residues include cysteine 1147, cysteine 1149, cysteine 1154, cysteine 1159, cysteine 1182, cysteine 1203, cysteine 1207, cysteine 1209, and cysteine 1213. The SET domain maps to 1224–1356; it reads AKLEVFRTES…AGEEITRDYG (133 aa). Residues 1234–1236, tyrosine 1277, and 1313–1314 contribute to the S-adenosyl-L-methionine site; these read KGW and NH. Residue cysteine 1316 participates in Zn(2+) binding. Residue tyrosine 1355 coordinates S-adenosyl-L-methionine. A Post-SET domain is found at 1366–1382; the sequence is NEHPCHCKATNCRGLLS. The Zn(2+) site is built by cysteine 1370, cysteine 1372, and cysteine 1377.

The protein belongs to the class V-like SAM-binding methyltransferase superfamily. In terms of assembly, component of a regulatory complex with LDL1/SWP1. Interacts with LDL1/SWP1.

It localises to the nucleus. Its subcellular location is the chromosome. The enzyme catalyses L-lysyl-[histone] + S-adenosyl-L-methionine = N(6)-methyl-L-lysyl-[histone] + S-adenosyl-L-homocysteine + H(+). Functionally, histone methyltransferase that functions together with its binding partner LDL1/SWP1 as one of the regulators of flower timing in Arabidopsis. Mediates H3K9me2 deposition and regulates gene expression in a DNA methylation-independent manner. Binds DNA through its zinc fingers and represses the expression of a subset of stimulus response genes. May represent a novel mechanism for plants to regulate their chromatin and transcriptional state, which may allow for the adaptability and modulation necessary to rapidly respond to environment or developmental cues. The sequence is that of Histone-lysine N-methyltransferase SUVR5 from Arabidopsis thaliana (Mouse-ear cress).